The sequence spans 204 residues: Thiamine-phosphate synthase (204 aa).

Residues 37 to 41 (QVREK) and N69 each bind 4-amino-2-methyl-5-(diphosphooxymethyl)pyrimidine. Mg(2+)-binding residues include D70 and D89. A 4-amino-2-methyl-5-(diphosphooxymethyl)pyrimidine-binding site is contributed by S108. 134 to 136 (TGT) serves as a coordination point for 2-[(2R,5Z)-2-carboxy-4-methylthiazol-5(2H)-ylidene]ethyl phosphate. K137 contributes to the 4-amino-2-methyl-5-(diphosphooxymethyl)pyrimidine binding site. Residues G165 and 185-186 (IS) each bind 2-[(2R,5Z)-2-carboxy-4-methylthiazol-5(2H)-ylidene]ethyl phosphate.

Belongs to the thiamine-phosphate synthase family. Mg(2+) is required as a cofactor.

It carries out the reaction 2-[(2R,5Z)-2-carboxy-4-methylthiazol-5(2H)-ylidene]ethyl phosphate + 4-amino-2-methyl-5-(diphosphooxymethyl)pyrimidine + 2 H(+) = thiamine phosphate + CO2 + diphosphate. The enzyme catalyses 2-(2-carboxy-4-methylthiazol-5-yl)ethyl phosphate + 4-amino-2-methyl-5-(diphosphooxymethyl)pyrimidine + 2 H(+) = thiamine phosphate + CO2 + diphosphate. It catalyses the reaction 4-methyl-5-(2-phosphooxyethyl)-thiazole + 4-amino-2-methyl-5-(diphosphooxymethyl)pyrimidine + H(+) = thiamine phosphate + diphosphate. Its pathway is cofactor biosynthesis; thiamine diphosphate biosynthesis; thiamine phosphate from 4-amino-2-methyl-5-diphosphomethylpyrimidine and 4-methyl-5-(2-phosphoethyl)-thiazole: step 1/1. Functionally, condenses 4-methyl-5-(beta-hydroxyethyl)thiazole monophosphate (THZ-P) and 2-methyl-4-amino-5-hydroxymethyl pyrimidine pyrophosphate (HMP-PP) to form thiamine monophosphate (TMP). This is Thiamine-phosphate synthase from Clostridium novyi (strain NT).